Consider the following 310-residue polypeptide: p-hydroxybenzoic acid efflux pump subunit AaeA (310 aa).

The helical transmembrane segment at 12–32 (AITVVLVILAFIAIFNAWVYY) threads the bilayer.

It belongs to the membrane fusion protein (MFP) (TC 8.A.1) family.

The protein localises to the cell inner membrane. In terms of biological role, forms an efflux pump with AaeB. The polypeptide is p-hydroxybenzoic acid efflux pump subunit AaeA (Escherichia coli O139:H28 (strain E24377A / ETEC)).